Consider the following 94-residue polypeptide: uncharacterized protein (94 aa).

This sequence to M.tuberculosis Rv2632c.

This is an uncharacterized protein from Mycobacterium tuberculosis (strain CDC 1551 / Oshkosh).